Consider the following 288-residue polypeptide: Syntaxin-1B (288 aa).

Residues Met1–Asp13 are compositionally biased toward basic and acidic residues. The disordered stretch occupies residues Met1–Val20. The Cytoplasmic segment spans residues Met1–Lys264. A phosphoserine mark is found at Ser10 and Ser14. A coiled-coil region spans residues Met29–Gly104. Positions Leu191–Ala253 constitute a t-SNARE coiled-coil homology domain. The helical; Anchor for type IV membrane protein transmembrane segment at Ile265–Leu288 threads the bilayer.

It belongs to the syntaxin family. In terms of assembly, interacts with OTOF. Interacts with SYT6 and SYT8; the interaction is Ca(2+)-dependent. Post-translationally, phosphorylated by CK2. In terms of processing, (Microbial infection) Targeted and hydrolyzed by C.botulinum neurotoxin type C (BoNT/C); cleavage by BoNT/C inhibits neurotransmitter release. Probably hydrolyzes the 252-Lys-|-Ala-253 bond.

It localises to the membrane. Potentially involved in docking of synaptic vesicles at presynaptic active zones. May mediate Ca(2+)-regulation of exocytosis acrosomal reaction in sperm. This Bos taurus (Bovine) protein is Syntaxin-1B (STX1B).